We begin with the raw amino-acid sequence, 205 residues long: Golgi to ER traffic protein 1 (205 aa).

Topologically, residues 1–3 (MDY) are lumenal. Residues 4–24 (WILLVLAFLVADKSWHLTGLL) form a helical membrane-spanning segment. Topologically, residues 25–96 (ATKLTSPERL…ATKARLAKLK (72 aa)) are cytoplasmic. The stretch at 32–96 (ERLQQLIRER…ATKARLAKLK (65 aa)) forms a coiled coil. Residues 97-117 (LLVVTVPFTALKFYKGKLPVY) form a helical membrane-spanning segment. Residues 118–156 (ALPKGMFPRFIEGTLEHGWLYMALAPLNMKQFSEGASVA) are Lumenal-facing. A helical transmembrane segment spans residues 157 to 173 (VSLGIWLFALLRVLGAI). The Cytoplasmic portion of the chain corresponds to 174–205 (EFVLETLREQNPQVATETAKVHARTAQAASAN).

Belongs to the WRB/GET1 family. In terms of assembly, component of the Golgi to ER traffic (GET) complex, which is composed of GET1, GET2 and GET3. Within the complex, GET1 and GET2 form a heterotetramer which is stabilized by phosphatidylinositol binding and which binds to the GET3 homodimer.

The protein localises to the endoplasmic reticulum membrane. The protein resides in the golgi apparatus membrane. Functionally, required for the post-translational delivery of tail-anchored (TA) proteins to the endoplasmic reticulum. Together with GET2, acts as a membrane receptor for soluble GET3, which recognizes and selectively binds the transmembrane domain of TA proteins in the cytosol. The GET complex cooperates with the HDEL receptor ERD2 to mediate the ATP-dependent retrieval of resident ER proteins that contain a C-terminal H-D-E-L retention signal from the Golgi to the ER. This Eremothecium gossypii (strain ATCC 10895 / CBS 109.51 / FGSC 9923 / NRRL Y-1056) (Yeast) protein is Golgi to ER traffic protein 1.